Consider the following 162-residue polypeptide: Sorting nexin-12 (162 aa).

Residues 1–20 (MSDTAVADTRRLNSKPQDLT) are disordered. S2 is modified (N-acetylserine). A Phosphotyrosine modification is found at Y23. One can recognise a PX domain in the interval 28–152 (NFLEIDIFNP…HMFLQEEAID (125 aa)). Residues R71, S73, K96, and R119 each contribute to the a 1,2-diacyl-sn-glycero-3-phospho-(1D-myo-inositol-3-phosphate) site. At S73 the chain carries Phosphoserine.

Belongs to the sorting nexin family.

The protein localises to the membrane. Functionally, may be involved in several stages of intracellular trafficking. This Homo sapiens (Human) protein is Sorting nexin-12 (SNX12).